A 197-amino-acid chain; its full sequence is Rac-like GTP-binding protein RHO1 (197 aa).

13–20 is a binding site for GTP; sequence GDGAVGKT. Positions 35–43 match the Effector region motif; sequence YVPTVFDNF. GTP-binding positions include 60–64 and 118–121; these read DTAGQ and TKLD. Cys-194 carries the cysteine methyl ester modification. Cys-194 carries S-geranylgeranyl cysteine lipidation. The propeptide at 195 to 197 is removed in mature form; the sequence is SIL.

The protein belongs to the small GTPase superfamily. Rho family. Expressed at the tip of pollen tubes.

It localises to the cytoplasm. The protein resides in the membrane. Functionally, inactive GDP-bound Rho GTPases reside in the cytosol, are found in a complex with Rho GDP-dissociation inhibitors (Rho GDIs), and are released from the GDI protein in order to translocate to membranes upon activation. May be involved in cell polarity control during the actin-dependent tip growth of pollen tubes. This is Rac-like GTP-binding protein RHO1 (RHO1) from Pisum sativum (Garden pea).